Here is a 61-residue protein sequence, read N- to C-terminus: Large ribosomal subunit protein uL30 (61 aa).

It belongs to the universal ribosomal protein uL30 family. As to quaternary structure, part of the 50S ribosomal subunit.

The protein is Large ribosomal subunit protein uL30 of Acidithiobacillus ferrooxidans (strain ATCC 23270 / DSM 14882 / CIP 104768 / NCIMB 8455) (Ferrobacillus ferrooxidans (strain ATCC 23270)).